We begin with the raw amino-acid sequence, 243 residues long: Exosome complex component Rrp41 (243 aa).

It belongs to the RNase PH family. Rrp41 subfamily. As to quaternary structure, component of the archaeal exosome complex. Forms a hexameric ring-like arrangement composed of 3 Rrp41-Rrp42 heterodimers. The hexameric ring associates with a trimer of Rrp4 and/or Csl4 subunits.

It is found in the cytoplasm. In terms of biological role, catalytic component of the exosome, which is a complex involved in RNA degradation. Has 3'-&gt;5' exoribonuclease activity. Can also synthesize heteromeric RNA-tails. The sequence is that of Exosome complex component Rrp41 from Cenarchaeum symbiosum (strain A).